A 269-amino-acid chain; its full sequence is Formamidopyrimidine-DNA glycosylase (269 aa).

Catalysis depends on Pro-2, which acts as the Schiff-base intermediate with DNA. Residue Glu-3 is the Proton donor of the active site. The Proton donor; for beta-elimination activity role is filled by Lys-57. Residues His-90, Arg-109, and Lys-150 each coordinate DNA. The FPG-type zinc-finger motif lies at 235–269; that stretch reads QVYGRKGEPCRVCGTPIVATKHAQRATFYCRHCQK. Residue Arg-259 is the Proton donor; for delta-elimination activity of the active site.

Belongs to the FPG family. Monomer. Requires Zn(2+) as cofactor.

The enzyme catalyses Hydrolysis of DNA containing ring-opened 7-methylguanine residues, releasing 2,6-diamino-4-hydroxy-5-(N-methyl)formamidopyrimidine.. It carries out the reaction 2'-deoxyribonucleotide-(2'-deoxyribose 5'-phosphate)-2'-deoxyribonucleotide-DNA = a 3'-end 2'-deoxyribonucleotide-(2,3-dehydro-2,3-deoxyribose 5'-phosphate)-DNA + a 5'-end 5'-phospho-2'-deoxyribonucleoside-DNA + H(+). Functionally, involved in base excision repair of DNA damaged by oxidation or by mutagenic agents. Acts as a DNA glycosylase that recognizes and removes damaged bases. Has a preference for oxidized purines, such as 7,8-dihydro-8-oxoguanine (8-oxoG). Has AP (apurinic/apyrimidinic) lyase activity and introduces nicks in the DNA strand. Cleaves the DNA backbone by beta-delta elimination to generate a single-strand break at the site of the removed base with both 3'- and 5'-phosphates. This is Formamidopyrimidine-DNA glycosylase from Salmonella enteritidis PT4 (strain P125109).